Reading from the N-terminus, the 174-residue chain is Phytochrome-interacting ankyrin-repeat protein 2 (174 aa).

Positions 1 to 13 (MLQEPSAAFSLRR) are enriched in low complexity. The tract at residues 1-29 (MLQEPSAAFSLRRNSFRRRSPRSNVDDRG) is disordered. Ser-15 is subject to Phosphoserine. ANK repeat units follow at residues 28–57 (RGWN…DVNA), 65–94 (KGVS…NIDA), and 100–129 (CGWT…FLAD).

In terms of assembly, interacts with phytochrome A (PHYA), both in Pr and Pfr forms. Binds to PIF3, a repressor of photomorphogenesis in response to phytochrome-mediated light signaling; this interaction may trigger the repression of PHYA-mediated PIF3 phosphorylation. Interacts with SIGE/SIG5 in mitochondrion. Interacts with RPS9M (via C terminus). In terms of processing, phosphorylated by PHYA. Mostly expressed in flowers, cotyledons, leaves and siliques, and, to a lower extent, in roots and stems. Also detected at low levels in seedlings grown in continuous dark or light conditions. Expressed in male and female gametophytes.

The protein localises to the cytoplasm. It is found in the nucleus. The protein resides in the mitochondrion. Its function is as follows. Promotes anthocyanin accumulation through interaction with PHYA, especially in response to far-red light, high light and sucrose treatment, probably by triggering A3G2XYLT/UF3GT expression. Required for gametophytes development as well as male-female gamete recognition during fertilization, possibly by regulating mitochondrial gene expression. Represses PHYA-mediated PIF3 phosphorylation. The protein is Phytochrome-interacting ankyrin-repeat protein 2 of Arabidopsis thaliana (Mouse-ear cress).